A 227-amino-acid polypeptide reads, in one-letter code: A-type potassium channel modulatory protein KCNIP1 (227 aa).

The EF-hand 1; degenerate domain occupies 38–94 (LEMTMVCHRPEGLEQLEAQTNFTKRELQVLYRGFKNECPSGVVNEDTFKQIYAQFFP). 3 EF-hand domains span residues 97–132 (DASTYAHYLFNAFDTTQTGSVKFEDFVTALSILLRG), 133–168 (TVHEKLRWTFNLYDINKDGYINKEEMMDIVKAIYDM), and 181–216 (TPRQHVDVFFQKMDKNKDGIVTLDEFLESCQEDDNI). Positions 146, 148, 150, 152, 157, 194, 196, 198, and 205 each coordinate Ca(2+). The segment at 214–227 (DNIMRSLQLFQNVM) is interaction with KCND2.

The protein belongs to the recoverin family. As to quaternary structure, component of heteromultimeric potassium channels. Identified in potassium channel complexes containing KCND1, KCND2, KCND3, KCNIP1, KCNIP2, KCNIP3, KCNIP4, DPP6 and DPP10. Part of a heterooctamer composed of the tetrameric channel and four KCNIP1 chains. Probably part of a complex consisting of KCNIP1, KCNIP2 isoform 3 and KCND2. Self-associates to form homodimers and homotetramers. Interacts with KCNIP2 isoform 3 in a calcium-dependent manner. Interacts with Naja atra venom CTX3. Interacts with KCND2; this interaction mediates the capture of both the N- and C-terminus of KCND2, thus preventing KCND2 N-type inactivation and modulates the channel gating kinetics. Interacts with KCND3; each KCNIP1 monomer interacts with two adjacent KCND3 subunits, through both the N-terminal inactivation ball of a KCND3 subunit and a C-terminal helix from the adjacent KCND3 subunit, clamping them together; this interaction stabilizes the tetrameric form and modulates the channel gating kinetics namely channel activation and inactivation kinetics and rate of recovery from inactivation. In terms of tissue distribution, isoform 1 and isoform 2 are expressed in brain and kidney. Isoform 1 is also expressed in liver, pancreas, skeletal muscle, small intestine and testis. Isoform 2 is also expressed in lung, pancreas, leukocytes, prostate and thymus.

The protein resides in the cell membrane. It is found in the cytoplasm. Its subcellular location is the cell projection. It localises to the dendrite. In terms of biological role, regulatory subunit of Kv4/D (Shal)-type voltage-gated rapidly inactivating A-type potassium channels. Regulates channel density, inactivation kinetics and rate of recovery from inactivation in a calcium-dependent and isoform-specific manner. In vitro, modulates KCND1/Kv4.1 and KCND2/Kv4.2 currents. Increases the presence of KCND2 at the cell surface. This chain is A-type potassium channel modulatory protein KCNIP1, found in Homo sapiens (Human).